Consider the following 976-residue polypeptide: Collagen alpha-1(I) chain (976 aa).

Residue Ser1 is modified to Phosphoserine. The segment at 1–976 (SAGGISVPGP…PGPPGPPGPP (976 aa)) is disordered. A 4-hydroxyproline mark is found at Pro20, Pro23, Pro26, Pro35, Pro38, Pro41, Pro55, Pro70, Pro76, Pro85, and Pro91. Over residues 58–72 (NGDDGEAGKPGRPGE) the composition is skewed to basic and acidic residues. Lys94 carries the 5-hydroxylysine; alternate modification. Lys94 is a glycosylation site (O-linked (Gal...) hydroxylysine; alternate). Phosphoserine is present on Ser100. Low complexity-rich tracts occupy residues 108–118 (DAGPAGPKGAP) and 132–150 (PGAS…TGAA). A 4-hydroxyproline mark is found at Pro118, Pro132, Pro153, Pro162, Pro165, Pro192, Pro195, Pro207, Pro213, Pro222, Pro228, Pro231, and Pro246. The segment covering 152–164 (PPGPTGPAGPPGF) has biased composition (pro residues). Low complexity predominate over residues 198 to 237 (AGAAGPAGNPGADGQPGAKGANGAPGIAGAPGFPGARGPS). Lys249 bears the 5-hydroxylysine mark. 4-hydroxyproline occurs at positions 255, 258, 266, 275, 290, 296, 304, and 310. Residues 294–308 (GLPGPGERGGPGSRG) show a composition bias toward gly residues. Residue Lys319 is modified to 5-hydroxylysine. 4-hydroxyproline occurs at positions 328, 337, 343, 349, 358, 361, 370, 379, 385, 397, 406, 415, 418, 436, 453, 459, 465, 471, 477, 483, 495, 504, 517, 523, and 532. Positions 352 to 378 (KGLTGSPGSPGPDGKTGPPGPAGQDGR) are enriched in low complexity. The span at 387 to 406 (ARGQAGVMGFPGPKGAAGEP) shows a compositional bias: low complexity. A compositionally biased stretch (low complexity) spans 465 to 474 (PGEAGKPGEQ). Lys544 carries the 5-hydroxylysine modification. A 4-hydroxyproline mark is found at Pro550, Pro565, and Pro571. A compositionally biased stretch (low complexity) spans 577–591 (SGPSGPAGPTGARGA). Phosphoserine is present on Ser580. Residues Pro592, Pro598, Pro601, Pro610, Pro616, Pro634, Pro643, and Pro652 each carry the 4-hydroxyproline modification. A compositionally biased stretch (low complexity) spans 604–631 (AGFAGPPGADGQPGAKGEPGDAGAKGDA). Lys655 carries the post-translational modification 5-hydroxylysine. The span at 660–676 (SAGPPGATGFPGAAGRV) shows a compositional bias: low complexity. 4-hydroxyproline is present on residues Pro664 and Pro670. 3-hydroxyproline is present on Pro678. 15 positions are modified to 4-hydroxyproline: Pro679, Pro688, Pro691, Pro718, Pro726, Pro735, Pro753, Pro762, Pro765, Pro771, Pro786, Pro792, Pro798, Pro806, and Pro812. The segment covering 723–735 (KGSPGADGPAGAP) has biased composition (low complexity). Positions 785-795 (PPGPMGPPGLA) are enriched in pro residues. 5-hydroxylysine is present on Lys821. A compositionally biased stretch (pro residues) spans 829 to 844 (PGPPGAPGAPGAPGPV). 3 positions are modified to 4-hydroxyproline: Pro832, Pro835, and Pro838. A compositionally biased stretch (low complexity) spans 864–878 (AGPAGARGPAGPQGP). Residues 879-893 (RGDKGETGEQGDRGI) are compositionally biased toward basic and acidic residues. Lys882 is subject to 5-hydroxylysine. Residue Lys894 is modified to 5-hydroxylysine; alternate. O-linked (Gal...) hydroxylysine; alternate glycosylation occurs at Lys894. A 4-hydroxyproline mark is found at Pro907, Pro910, Pro928, and Pro943. The span at 910 to 943 (PGEQGPSGASGPAGPRGPPGSAGSPGKDGLNGLP) shows a compositional bias: low complexity. Residue Pro948 is modified to 3-hydroxyproline. 4-hydroxyproline is present on Pro949. Pro residues predominate over residues 961 to 976 (VGPPGPPGPPGPPGPP). Pro963 bears the 3-hydroxyproline mark. Pro964 is subject to 4-hydroxyproline. 3-hydroxyproline is present on Pro966. Pro967 is subject to 4-hydroxyproline. The residue at position 969 (Pro969) is a 3-hydroxyproline. 3 positions are modified to 4-hydroxyproline: Pro970, Pro973, and Pro976.

Belongs to the fibrillar collagen family. Trimers of one alpha 2(I) and two alpha 1(I) chains. Post-translationally, contains mostly 4-hydroxyproline. Proline residues at the third position of the tripeptide repeating unit (G-X-Y) are hydroxylated in some or all of the chains. In terms of processing, contains 3-hydroxyproline at a few sites. This modification occurs on the first proline residue in the sequence motif Gly-Pro-Hyp, where Hyp is 4-hydroxyproline. Lysine residues at the third position of the tripeptide repeating unit (G-X-Y) are 5-hydroxylated in some or all of the chains. Post-translationally, O-glycosylated on hydroxylated lysine residues. The O-linked glycan consists of a Glc-Gal disaccharide. As to expression, expressed in bones.

The protein resides in the secreted. It is found in the extracellular space. It localises to the extracellular matrix. Type I collagen is a member of group I collagen (fibrillar forming collagen). The protein is Collagen alpha-1(I) chain of Acratocnus ye (Hispaniolan ground sloth).